The primary structure comprises 287 residues: ATP synthase gamma chain (287 aa).

This sequence belongs to the ATPase gamma chain family. As to quaternary structure, F-type ATPases have 2 components, CF(1) - the catalytic core - and CF(0) - the membrane proton channel. CF(1) has five subunits: alpha(3), beta(3), gamma(1), delta(1), epsilon(1). CF(0) has three main subunits: a, b and c.

The protein localises to the cell inner membrane. In terms of biological role, produces ATP from ADP in the presence of a proton gradient across the membrane. The gamma chain is believed to be important in regulating ATPase activity and the flow of protons through the CF(0) complex. The sequence is that of ATP synthase gamma chain from Xylella fastidiosa (strain M23).